Here is a 231-residue protein sequence, read N- to C-terminus: 7-cyano-7-deazaguanine synthase (231 aa).

7–17 (LSSGLDSVAAL) lines the ATP pocket. Positions 195, 203, 206, and 209 each coordinate Zn(2+).

Belongs to the QueC family. Zn(2+) serves as cofactor.

It carries out the reaction 7-carboxy-7-deazaguanine + NH4(+) + ATP = 7-cyano-7-deazaguanine + ADP + phosphate + H2O + H(+). It functions in the pathway purine metabolism; 7-cyano-7-deazaguanine biosynthesis. In terms of biological role, catalyzes the ATP-dependent conversion of 7-carboxy-7-deazaguanine (CDG) to 7-cyano-7-deazaguanine (preQ(0)). The protein is 7-cyano-7-deazaguanine synthase of Methanosarcina mazei (strain ATCC BAA-159 / DSM 3647 / Goe1 / Go1 / JCM 11833 / OCM 88) (Methanosarcina frisia).